The primary structure comprises 364 residues: Ribosomal RNA large subunit methyltransferase F (364 aa).

Residues 1 to 17 (MPKPAIKTAAKPATSSA) show a composition bias toward low complexity. The disordered stretch occupies residues 1–53 (MPKPAIKTAAKPATSSAGKRGKPNTPKSVAKPKTAKPKTASKPKVKPGEKKRL). The span at 33–53 (KTAKPKTASKPKVKPGEKKRL) shows a compositional bias: basic residues.

The protein belongs to the methyltransferase superfamily. METTL16/RlmF family.

It is found in the cytoplasm. The enzyme catalyses adenosine(1618) in 23S rRNA + S-adenosyl-L-methionine = N(6)-methyladenosine(1618) in 23S rRNA + S-adenosyl-L-homocysteine + H(+). Its function is as follows. Specifically methylates the adenine in position 1618 of 23S rRNA. This is Ribosomal RNA large subunit methyltransferase F from Shewanella sp. (strain MR-7).